Here is a 385-residue protein sequence, read N- to C-terminus: FK506-binding protein 5 (385 aa).

A PPIase FKBP-type domain is found at 26–115; the sequence is TNFVSVHYDA…RFEVELIGFW (90 aa). TPR repeat units follow at residues 128–161, 177–210, and 211–244; these read AEKKKNEGNALFKLDAIESALFAYRKGREYIQDL, VSIQLNIGACHLKLKHYDHAIEVCQKALDRDMTK, and IKAYYRIGQAYMEKGDYESSLTFIRIGLETAIGL.

The catalysed reaction is [protein]-peptidylproline (omega=180) = [protein]-peptidylproline (omega=0). With respect to regulation, inhibited by both FK506 and rapamycin. PPIases accelerate the folding of proteins. It catalyzes the cis-trans isomerization of proline imidic peptide bonds in oligopeptides. This chain is FK506-binding protein 5 (FKBP5), found in Rhizopus delemar (strain RA 99-880 / ATCC MYA-4621 / FGSC 9543 / NRRL 43880) (Mucormycosis agent).